Consider the following 105-residue polypeptide: MVNNVTDSSFKNEVLESDLPVMVDFWAEWCGPCKMLIPIIDEISKELQDKVKVLKMNIDENPKTPSEYGIRSIPTIMLFKNGEQKDTKIGLQQKNSLLDWINKSI.

One can recognise a Thioredoxin domain in the interval M1–I105. An intrachain disulfide couples C30 to C33.

This sequence belongs to the thioredoxin family.

Functionally, component of the thioredoxin-thioredoxin reductase system. Participates in various redox reactions through the reversible oxidation of its active center dithiol to a disulfide and catalyzes dithiol-disulfide exchange reactions. The protein is Thioredoxin (trxA) of Rickettsia prowazekii (strain Madrid E).